The following is a 472-amino-acid chain: Siroheme synthase (472 aa).

The tract at residues 1 to 204 (MDYLPIFTKL…GQTEKAIALM (204 aa)) is precorrin-2 dehydrogenase /sirohydrochlorin ferrochelatase. NAD(+)-binding positions include 22 to 23 (SI) and 43 to 44 (LE). Phosphoserine is present on serine 128. Positions 215-472 (GDVALVGAGP…SRDPFLVNLA (258 aa)) are uroporphyrinogen-III C-methyltransferase. Residue proline 224 coordinates S-adenosyl-L-methionine. Residue aspartate 247 is the Proton acceptor of the active site. The Proton donor role is filled by lysine 269. S-adenosyl-L-methionine is bound by residues 300 to 302 (GGD), isoleucine 305, 330 to 331 (TA), methionine 382, and glycine 411.

It in the N-terminal section; belongs to the precorrin-2 dehydrogenase / sirohydrochlorin ferrochelatase family. This sequence in the C-terminal section; belongs to the precorrin methyltransferase family.

It catalyses the reaction uroporphyrinogen III + 2 S-adenosyl-L-methionine = precorrin-2 + 2 S-adenosyl-L-homocysteine + H(+). The enzyme catalyses precorrin-2 + NAD(+) = sirohydrochlorin + NADH + 2 H(+). It carries out the reaction siroheme + 2 H(+) = sirohydrochlorin + Fe(2+). It participates in cofactor biosynthesis; adenosylcobalamin biosynthesis; precorrin-2 from uroporphyrinogen III: step 1/1. Its pathway is cofactor biosynthesis; adenosylcobalamin biosynthesis; sirohydrochlorin from precorrin-2: step 1/1. The protein operates within porphyrin-containing compound metabolism; siroheme biosynthesis; precorrin-2 from uroporphyrinogen III: step 1/1. It functions in the pathway porphyrin-containing compound metabolism; siroheme biosynthesis; siroheme from sirohydrochlorin: step 1/1. It participates in porphyrin-containing compound metabolism; siroheme biosynthesis; sirohydrochlorin from precorrin-2: step 1/1. Functionally, multifunctional enzyme that catalyzes the SAM-dependent methylations of uroporphyrinogen III at position C-2 and C-7 to form precorrin-2 via precorrin-1. Then it catalyzes the NAD-dependent ring dehydrogenation of precorrin-2 to yield sirohydrochlorin. Finally, it catalyzes the ferrochelation of sirohydrochlorin to yield siroheme. This Psychromonas ingrahamii (strain DSM 17664 / CCUG 51855 / 37) protein is Siroheme synthase.